A 1084-amino-acid polypeptide reads, in one-letter code: Histone deacetylase 4 (1084 aa).

Residues 67–177 (REQQLQQELL…STEVKMKLQE (111 aa)) are a coiled coil. The interaction with MEF2A stretch occupies residues 118 to 313 (MLAMKHQQEL…NNSSGSVSAE (196 aa)). The segment covering 133-163 (KLERHRQEQELEKQHREQKLQQLKNKEKGKE) has biased composition (basic and acidic residues). Disordered stretches follow at residues 133-166 (KLER…ESAV), 206-226 (TQHS…TSYN), and 240-315 (PLRK…AENG). Position 210 is a phosphoserine (S210). S246 bears the Phosphoserine; by CaMK4 and SIK1 mark. Basic and acidic residues predominate over residues 259-274 (KVAERRSSPLLRRKDG). Low complexity predominate over residues 290–312 (SACSSAPGSGPSSPNNSSGSVSA). A PxLPxI/L motif; mediates interaction with ANKRA2 and 14-3-3 proteins motif is present at residues 349-354 (PSLPNI). A Phosphoserine modification is found at S350. Phosphoserine; by CaMK4 and SIK1 is present on S467. Disordered regions lie at residues 509–531 (PKPS…ELRE), 548–585 (KEAH…QPSE), and 626–646 (PLSR…VQEP). Positions 516-531 (RQPESHPEETEEELRE) are enriched in basic and acidic residues. K559 participates in a covalent cross-link: Glycyl lysine isopeptide (Lys-Gly) (interchain with G-Cter in SUMO). S565 is subject to Phosphoserine. The span at 629–641 (RAQSSPASATFPV) shows a compositional bias: polar residues. S632 is subject to Phosphoserine; by CaMK4. S633 is modified (phosphoserine). The segment at 655–1084 (GLVYDTLMLK…EEPMEEEPPL (430 aa)) is histone deacetylase. Zn(2+) is bound by residues C667, C669, H675, and C751. Residue H803 is part of the active site. Residues 1051–1084 (EEAETVTAMASLSVGVKPAEKRPDEEPMEEEPPL) carry the Nuclear export signal motif. Residues 1061–1084 (SLSVGVKPAEKRPDEEPMEEEPPL) form a disordered region.

It belongs to the histone deacetylase family. HD type 2 subfamily. As to quaternary structure, homodimer. Homodimerization via its N-terminal domain. Interacts with MEF2A. Interacts with MEF2C and MEF2D. Interacts with AHRR. Interacts with NR2C1. Interacts with HDAC7. Interacts with a 14-3-3 chaperone proteins in a phosphorylation dependent manner. Interacts with 14-3-3 protein YWHAB. Interacts with BTBD14B. Interacts with KDM5B. Interacts with MYOCD. Interacts with MORC2. Interacts (via PxLPxI/L motif) with ANKRA2 (via ankyrin repeats). Interacts with CUL7 (as part of the 3M complex); negatively regulated by ANKRA2. Interacts with EP300 in the presence of TFAP2C. Interacts with HSPA1A and HSPA1B leading to their deacetylation at 'Lys-77'. Interacts with ZBTB7B; the interaction allows the recruitment of HDAC4 on CD8 loci for deacetylation and possible inhibition of CD8 genes expression. Interacts with DHX36. Interacts with SIK3; this interaction leads to HDAC4 retention in the cytoplasm. Interacts with ZNF638. Post-translationally, phosphorylated by CaMK4 at Ser-246, Ser-467 and Ser-632. Phosphorylation at other residues by CaMK2D is required for the interaction with 14-3-3. Phosphorylation at Ser-350, within the PxLPxI/L motif, impairs the binding of ANKRA2 but generates a high-affinity docking site for 14-3-3. In terms of processing, sumoylation on Lys-559 is promoted by the E3 SUMO-protein ligase RANBP2, and prevented by phosphorylation by CaMK4. In terms of tissue distribution, ubiquitous.

The protein resides in the nucleus. It is found in the cytoplasm. The catalysed reaction is N(6)-acetyl-L-lysyl-[histone] + H2O = L-lysyl-[histone] + acetate. Responsible for the deacetylation of lysine residues on the N-terminal part of the core histones (H2A, H2B, H3 and H4). Histone deacetylation gives a tag for epigenetic repression and plays an important role in transcriptional regulation, cell cycle progression and developmental events. Histone deacetylases act via the formation of large multiprotein complexes. Involved in muscle maturation via its interaction with the myocyte enhancer factors such as MEF2A, MEF2C and MEF2D. Involved in the MTA1-mediated epigenetic regulation of ESR1 expression in breast cancer. Deacetylates HSPA1A and HSPA1B at 'Lys-77' leading to their preferential binding to co-chaperone STUB1. This Homo sapiens (Human) protein is Histone deacetylase 4.